The primary structure comprises 743 residues: Zinc transporter ZIP6 (743 aa).

Residues 1-20 (MARKLSVILILTFALSVTNP) form the signal peptide. Topologically, residues 21 to 313 (LHELKAAAFP…PKTYSLQIAW (293 aa)) are extracellular. Residue Asn67 is glycosylated (N-linked (GlcNAc...) asparagine). A compositionally biased stretch (basic and acidic residues) spans 96–116 (HEHHSDHEHHSDHEHHSDHEH). 2 disordered regions span residues 96 to 174 (HEHH…SASE) and 190 to 245 (LETI…SRNT). The span at 117–132 (HSHRNHAASGKNKRKA) shows a compositional bias: basic residues. Basic and acidic residues-rich tracts occupy residues 133 to 147 (LCPD…KDPR) and 155 to 167 (HRSE…RNVK). Positions 206-215 (VSSSTPPSVT) are enriched in polar residues. The segment covering 227-237 (KTNESVSEPRK) has biased composition (basic and acidic residues). Asn229, Asn254, and Asn271 each carry an N-linked (GlcNAc...) asparagine glycan. Residues 314–334 (VGGFIAISIISFLSLLGVILV) form a helical membrane-spanning segment. Over 335–343 (PLMNRVFFK) the chain is Cytoplasmic. The helical transmembrane segment at 344-364 (FLLSFLVALAVGTLSGDAFLH) threads the bilayer. At 365 to 411 (LLPHSHASHHHSHSHEEPAMEMKRGPLFSHLSSQNIEESAYFDSTWK) the chain is on the extracellular side. Residues 412-432 (GLTALGGLYFMFLVEHVLTLI) form a helical membrane-spanning segment. Over 433–645 (KQFKDKKKKN…LKAGMTVKQA (213 aa)) the chain is Cytoplasmic. A coiled-coil region spans residues 452-474 (VEIKKQLSKYESQLSTNEEKVDT). Residues Ser459 and Ser466 each carry the phosphoserine modification. A helical membrane pass occupies residues 646 to 666 (VLYNALSAMLAYLGMATGIFI). The Extracellular portion of the chain corresponds to 667-674 (GHYAENVS). N-linked (GlcNAc...) asparagine glycosylation occurs at Asn672. Residues 675–695 (MWIFALTAGLFMYVALVDMVP) traverse the membrane as a helical segment. At 696 to 712 (EMLHNDASDHGCSRWGY) the chain is on the cytoplasmic side. Residues 713-733 (FFLQNAGMLLGFGIMLLISIF) form a helical membrane-spanning segment. The Extracellular segment spans residues 734 to 743 (EHKIVFRINF).

This sequence belongs to the ZIP transporter (TC 2.A.5) family. Interacts with SLC39A10; which triggers cells to undergo EMT and mitosis. Found in a complex with SLC39A6, SLC39A10 and with the 'Ser-727' phosphorylated form of STAT3 throughout mitosis. Found in a complex with SLC39A6, SLC39A10 and with NCAM1; this complex controls NCAM1 phosphorylation and integration into focal adhesion complexes during epithelial-to-mesenchymal transition (EMT). Found in a complex with SLC39A6, SLC39A10 and with GSK3B that controls NCAM1 phosphorylation. Post-translationally, cleaved on the N-terminus before locating to the plasma membrane. N-glycosylated. In terms of processing, phosphorylated by ZAP70 in response to TCR stimulation leading to its activation.

It localises to the cell membrane. It is found in the cell projection. Its subcellular location is the lamellipodium membrane. The protein localises to the membrane raft. The protein resides in the apical cell membrane. It carries out the reaction Zn(2+)(in) = Zn(2+)(out). Functionally, zinc-influx transporter which plays a role in zinc homeostasis and in the induction of epithelial-to-mesenchymal transition (EMT). When associated with SLC39A10, the heterodimer formed by SLC39A10 and SLC39A6 mediates cellular zinc uptake to trigger cells to undergo epithelial- to-mesenchymal transition (EMT). The SLC39A10-SLC39A6 heterodimer also controls NCAM1 phosphorylation and its integration into focal adhesion complexes during EMT. Zinc influx inactivates GSK3B, enabling unphosphorylated SNAI1 in the nucleus to down-regulate adherence genes such as CDH1, causing loss of cell adherence. In addition, the SLC39A10-SLC39A6 heterodimer plays an essentiel role in initiating mitosis by importing zinc into cells to initiate a pathway resulting in the onset of mitosis. Participates in the T-cell receptor signaling regulation by mediating cellular zinc uptake into activated lymphocytes. Regulates the zinc influx necessary for proper meiotic progression to metaphase II (MII) that allows the oocyte-to-egg transition. The chain is Zinc transporter ZIP6 from Pongo abelii (Sumatran orangutan).